The primary structure comprises 347 residues: Probable replication factor C subunit 5 (347 aa).

ATP is bound at residue 64 to 71; sequence GPPGTGKT.

This sequence belongs to the activator 1 small subunits family. Heteropentamer of various rfc subunits that forms a complex (RFC) with PCNA in the presence of ATP.

Its subcellular location is the nucleus. Its function is as follows. The elongation of primed DNA templates by DNA polymerase delta and epsilon requires the action of the accessory proteins PCNA and activator 1. The chain is Probable replication factor C subunit 5 (rfc5) from Dictyostelium discoideum (Social amoeba).